A 167-amino-acid polypeptide reads, in one-letter code: 3-dehydroquinate dehydratase (167 aa).

Tyrosine 22 (proton acceptor) is an active-site residue. Positions 76, 82, and 89 each coordinate substrate. The active-site Proton donor is the histidine 102. Substrate-binding positions include 103-104 (LT) and arginine 113.

This sequence belongs to the type-II 3-dehydroquinase family. Homododecamer.

It catalyses the reaction 3-dehydroquinate = 3-dehydroshikimate + H2O. The protein operates within metabolic intermediate biosynthesis; chorismate biosynthesis; chorismate from D-erythrose 4-phosphate and phosphoenolpyruvate: step 3/7. In terms of biological role, catalyzes a trans-dehydration via an enolate intermediate. This chain is 3-dehydroquinate dehydratase, found in Helicobacter pylori (strain P12).